The following is a 147-amino-acid chain: Hemoglobin subunit beta (147 aa).

V2 is subject to N-acetylvaline. Residues 3–147 (HLSGDEKNAV…VANALAHRYH (145 aa)) form the Globin domain. A Phosphoserine modification is found at S45. K60 carries the post-translational modification N6-acetyllysine. Residue H64 coordinates heme b. K83 is subject to N6-acetyllysine. Heme b is bound at residue H93. C94 is subject to S-nitrosocysteine.

It belongs to the globin family. Heterotetramer of two alpha chains and two beta chains. As to expression, red blood cells.

Involved in oxygen transport from the lung to the various peripheral tissues. This is Hemoglobin subunit beta (HBB) from Camelus dromedarius (Dromedary).